A 286-amino-acid chain; its full sequence is tRNA (guanine-N(7)-)-methyltransferase (286 aa).

Residues Gly-91, 114 to 115 (EI), 158 to 159 (NS), and Leu-178 each bind S-adenosyl-L-methionine. Asp-181 is a catalytic residue. 256–258 (TEE) serves as a coordination point for S-adenosyl-L-methionine.

The protein belongs to the class I-like SAM-binding methyltransferase superfamily. TrmB family. Forms a complex with TRM82.

It localises to the nucleus. It catalyses the reaction guanosine(46) in tRNA + S-adenosyl-L-methionine = N(7)-methylguanosine(46) in tRNA + S-adenosyl-L-homocysteine. It functions in the pathway tRNA modification; N(7)-methylguanine-tRNA biosynthesis. In terms of biological role, catalyzes the formation of N(7)-methylguanine at position 46 (m7G46) in tRNA. The protein is tRNA (guanine-N(7)-)-methyltransferase of Cryptococcus neoformans var. neoformans serotype D (strain B-3501A) (Filobasidiella neoformans).